The following is a 510-amino-acid chain: GMP synthase [glutamine-hydrolyzing] (510 aa).

The 191-residue stretch at 5–195 folds into the Glutamine amidotransferase type-1 domain; it reads LVLVVDFGGQ…LFNVCNLKGD (191 aa). The active-site Nucleophile is cysteine 82. Active-site residues include histidine 169 and glutamate 171. In terms of domain architecture, GMPS ATP-PPase spans 196 to 385; the sequence is WSMSSFAEQQ…LGIPHKLVWR (190 aa). Residue 223-229 coordinates ATP; that stretch reads SGGVDSS.

In terms of assembly, homodimer.

The catalysed reaction is XMP + L-glutamine + ATP + H2O = GMP + L-glutamate + AMP + diphosphate + 2 H(+). The protein operates within purine metabolism; GMP biosynthesis; GMP from XMP (L-Gln route): step 1/1. Its function is as follows. Catalyzes the synthesis of GMP from XMP. The polypeptide is GMP synthase [glutamine-hydrolyzing] (Clostridium botulinum (strain ATCC 19397 / Type A)).